A 358-amino-acid polypeptide reads, in one-letter code: DNA polymerase IV (358 aa).

The UmuC domain occupies 4-185 (IIHIDMDCYF…LSLRKIPGVG (182 aa)). The Mg(2+) site is built by Asp8 and Asp103. Glu104 is an active-site residue.

Belongs to the DNA polymerase type-Y family. In terms of assembly, monomer. Mg(2+) is required as a cofactor.

The protein localises to the cytoplasm. It carries out the reaction DNA(n) + a 2'-deoxyribonucleoside 5'-triphosphate = DNA(n+1) + diphosphate. Functionally, poorly processive, error-prone DNA polymerase involved in untargeted mutagenesis. Copies undamaged DNA at stalled replication forks, which arise in vivo from mismatched or misaligned primer ends. These misaligned primers can be extended by PolIV. Exhibits no 3'-5' exonuclease (proofreading) activity. May be involved in translesional synthesis, in conjunction with the beta clamp from PolIII. The sequence is that of DNA polymerase IV from Shewanella baltica (strain OS185).